The following is a 515-amino-acid chain: 1-pyrroline-5-carboxylate dehydrogenase (515 aa).

Active-site residues include E286 and C320.

It belongs to the aldehyde dehydrogenase family. RocA subfamily.

The enzyme catalyses L-glutamate 5-semialdehyde + NAD(+) + H2O = L-glutamate + NADH + 2 H(+). It functions in the pathway amino-acid degradation; L-proline degradation into L-glutamate; L-glutamate from L-proline: step 2/2. The protein is 1-pyrroline-5-carboxylate dehydrogenase of Bacillus cytotoxicus (strain DSM 22905 / CIP 110041 / 391-98 / NVH 391-98).